A 480-amino-acid polypeptide reads, in one-letter code: MIQGSGSDVGKSLIVAGLCRAYRNRGLKVLPFKPQNMSNNAAVTPDGGEIGRAQAMQALACGAPLSVDMNPVLLKPQTGNGAQIVVQGKVVGTAAARDYQQWKPKLLGAVLDSFSKLAAKADLIVVEGAGSASEVNLRQNDIANMGFARAAGVPVILVGDIDRGGVIAQIVGTKSVIAPEDAAMIQGFIINKFRGDPTLFADGMAFIAQRSGWPALGLIPFCAEAALLPAEDSFGLSTARPKGRGKILIAVPILPGIANFDDLDPLRLEPDVEIAMVRSGEVLPAEARLVLLPGSKTTIADLAAFRREGWDIDLAAHVRRGGHVIGLCGGYQMLGRTLRDPAGVEGPSGEAAGLGLLDVETELTGDKTLAPAVGASAADGAPFKGYEMHLGRTFGPGCAAPLLILADGRREGAVSADGRVSGSYVHGLFSELAQRASLLARLGGEGSGLSYEASIERALDAVANHLESHMDLDHLLTLAS.

In terms of domain architecture, GATase cobBQ-type spans 246–434 (KILIAVPILP…VHGLFSELAQ (189 aa)). The active-site Nucleophile is the Cys328. His426 is an active-site residue.

This sequence belongs to the CobB/CobQ family. CobQ subfamily.

It participates in cofactor biosynthesis; adenosylcobalamin biosynthesis. Its function is as follows. Catalyzes amidations at positions B, D, E, and G on adenosylcobyrinic A,C-diamide. NH(2) groups are provided by glutamine, and one molecule of ATP is hydrogenolyzed for each amidation. The chain is Cobyric acid synthase from Methylocella silvestris (strain DSM 15510 / CIP 108128 / LMG 27833 / NCIMB 13906 / BL2).